A 256-amino-acid polypeptide reads, in one-letter code: ATP synthase subunit a (256 aa).

The propeptide at 1–7 (MLNLFIT) is removed in mature form. 6 helical membrane-spanning segments follow: residues 33 to 53 (FTTFSLYTIIVLFTVLGLNLL), 92 to 112 (YFPLVYTFFFFIFVSNLISMI), 122 to 142 (LIFIVSLSSVIWLGATIIGLT), 148 to 168 (FFSLFVPGGTPLPLVPLLVLI), 188 to 208 (VLSGHLLLIILGGLLFNLMSM), and 209 to 229 (SIITFVFGLIPGVGLLAIVVL).

It belongs to the ATPase A chain family. F-type ATPases have 2 components, CF(1) - the catalytic core - and CF(0) - the membrane proton channel. CF(1) has five subunits: alpha(3), beta(3), gamma(1), delta(1), epsilon(1). CF(0) has three main subunits: a, b and c.

It localises to the mitochondrion inner membrane. In terms of biological role, mitochondrial membrane ATP synthase (F(1)F(0) ATP synthase or Complex V) produces ATP from ADP in the presence of a proton gradient across the membrane which is generated by electron transport complexes of the respiratory chain. F-type ATPases consist of two structural domains, F(1) - containing the extramembraneous catalytic core and F(0) - containing the membrane proton channel, linked together by a central stalk and a peripheral stalk. During catalysis, ATP synthesis in the catalytic domain of F(1) is coupled via a rotary mechanism of the central stalk subunits to proton translocation. Key component of the proton channel; it may play a direct role in the translocation of protons across the membrane. The chain is ATP synthase subunit a (ATP6) from Kluyveromyces lactis (strain ATCC 8585 / CBS 2359 / DSM 70799 / NBRC 1267 / NRRL Y-1140 / WM37) (Yeast).